Reading from the N-terminus, the 87-residue chain is HssA/B-like protein 54 (87 aa).

It belongs to the hssA/B family.

The polypeptide is HssA/B-like protein 54 (hssl54) (Dictyostelium discoideum (Social amoeba)).